A 274-amino-acid polypeptide reads, in one-letter code: MNQYAVWGNPIAQSKSPRIHQLFGEQTGKSISYVAKLGNELNFENELMQFFAEGAKGANITAPFKERAFSLADEYSESCLLAEACNTLKRLDDGRLYADNTDGFGLCSDLERLGWLKPHQRVLILGAGGATKGVLFPLLKAKQQITIYNRTLEKAVRLAEKFAKYGKIRTASLEQIAEQQFDLIINATSLGLQGKYVPVAAHLLKSAAVYDMQYAPDMQTPFLNYARECGAVRYQDGLGMLVGQAGFAFKLWENEFPNVEKVLKQLKNEMENAK.

Shikimate-binding positions include 14-16 (SKS) and Thr61. Lys65 functions as the Proton acceptor in the catalytic mechanism. Glu77 serves as a coordination point for NADP(+). Asn86 and Asp102 together coordinate shikimate. NADP(+) is bound by residues 126–130 (GAGGA), 149–154 (NRTLEK), and Met212. A shikimate-binding site is contributed by Tyr214. Residue Gly237 coordinates NADP(+).

Belongs to the shikimate dehydrogenase family. Homodimer.

The enzyme catalyses shikimate + NADP(+) = 3-dehydroshikimate + NADPH + H(+). It functions in the pathway metabolic intermediate biosynthesis; chorismate biosynthesis; chorismate from D-erythrose 4-phosphate and phosphoenolpyruvate: step 4/7. Functionally, involved in the biosynthesis of the chorismate, which leads to the biosynthesis of aromatic amino acids. Catalyzes the reversible NADPH linked reduction of 3-dehydroshikimate (DHSA) to yield shikimate (SA). This is Shikimate dehydrogenase (NADP(+)) from Actinobacillus pleuropneumoniae serotype 5b (strain L20).